Consider the following 325-residue polypeptide: Probable arylamine N-acetyltransferase 1 (325 aa).

Cys-72 serves as the catalytic Acyl-thioester intermediate. Active-site residues include His-112 and Asp-127.

This sequence belongs to the arylamine N-acetyltransferase family.

It catalyses the reaction an arylamine + acetyl-CoA = an N-acetylarylamine + CoA. The protein is Probable arylamine N-acetyltransferase 1 of Dictyostelium discoideum (Social amoeba).